A 297-amino-acid polypeptide reads, in one-letter code: UDP-N-acetylenolpyruvoylglucosamine reductase (297 aa).

Residues 22 to 195 (RVGGPAQYYA…LAGRFRLHRA (174 aa)) enclose the FAD-binding PCMH-type domain. Residue Arg-169 is part of the active site. Ser-223 (proton donor) is an active-site residue. Glu-293 is an active-site residue.

The protein belongs to the MurB family. The cofactor is FAD.

Its subcellular location is the cytoplasm. The enzyme catalyses UDP-N-acetyl-alpha-D-muramate + NADP(+) = UDP-N-acetyl-3-O-(1-carboxyvinyl)-alpha-D-glucosamine + NADPH + H(+). It functions in the pathway cell wall biogenesis; peptidoglycan biosynthesis. Functionally, cell wall formation. The polypeptide is UDP-N-acetylenolpyruvoylglucosamine reductase (Chloroflexus aggregans (strain MD-66 / DSM 9485)).